Reading from the N-terminus, the 233-residue chain is Putative quercetin 2,3-dioxygenase PM1685 (233 aa).

His59, His61, His103, and Glu105 together coordinate a divalent metal cation.

The protein belongs to the pirin family. A divalent metal cation serves as cofactor.

It catalyses the reaction quercetin + O2 = 2-(3,4-dihydroxybenzoyloxy)-4,6-dihydroxybenzoate + CO. Its pathway is flavonoid metabolism; quercetin degradation. In terms of biological role, putative quercetin 2,3-dioxygenase. The protein is Putative quercetin 2,3-dioxygenase PM1685 of Pasteurella multocida (strain Pm70).